Reading from the N-terminus, the 592-residue chain is Aspartate--tRNA ligase (592 aa).

An L-aspartate-binding site is contributed by E177. The segment at 201 to 204 is aspartate; it reads QIFK. R223 contributes to the L-aspartate binding site. Residues 223–225 and Q232 each bind ATP; that span reads RDE. H451 provides a ligand contact to L-aspartate. E485 is a binding site for ATP. R492 lines the L-aspartate pocket. Position 537 to 540 (537 to 540) interacts with ATP; sequence GLDR.

It belongs to the class-II aminoacyl-tRNA synthetase family. Type 1 subfamily. In terms of assembly, homodimer.

It is found in the cytoplasm. The catalysed reaction is tRNA(Asp) + L-aspartate + ATP = L-aspartyl-tRNA(Asp) + AMP + diphosphate. Its function is as follows. Catalyzes the attachment of L-aspartate to tRNA(Asp) in a two-step reaction: L-aspartate is first activated by ATP to form Asp-AMP and then transferred to the acceptor end of tRNA(Asp). The protein is Aspartate--tRNA ligase of Bacillus licheniformis (strain ATCC 14580 / DSM 13 / JCM 2505 / CCUG 7422 / NBRC 12200 / NCIMB 9375 / NCTC 10341 / NRRL NRS-1264 / Gibson 46).